We begin with the raw amino-acid sequence, 365 residues long: 3-dehydroquinate synthase (365 aa).

NAD(+) is bound by residues 106-110 (GVIGD), 130-131 (TT), lysine 142, lysine 151, and 169-172 (FFAT). Glutamate 184, histidine 247, and histidine 264 together coordinate Zn(2+).

The protein belongs to the sugar phosphate cyclases superfamily. Dehydroquinate synthase family. The cofactor is NAD(+). Requires Co(2+) as cofactor. Zn(2+) serves as cofactor.

It is found in the cytoplasm. It carries out the reaction 7-phospho-2-dehydro-3-deoxy-D-arabino-heptonate = 3-dehydroquinate + phosphate. It participates in metabolic intermediate biosynthesis; chorismate biosynthesis; chorismate from D-erythrose 4-phosphate and phosphoenolpyruvate: step 2/7. Functionally, catalyzes the conversion of 3-deoxy-D-arabino-heptulosonate 7-phosphate (DAHP) to dehydroquinate (DHQ). This Listeria innocua serovar 6a (strain ATCC BAA-680 / CLIP 11262) protein is 3-dehydroquinate synthase.